The sequence spans 440 residues: MSFFKWVSFVLILHLLNPTLISCSSNGLSQIPSKFLTLAKRNDFFDWMVGIRRRIHENPELGYEEVETSKLVRAELEKMGVSYKYPVAVTGVVGYVGTGHAPFVALRADMDALAMQEMVEWEHKSKVPGKMHACGHDAHTTMLLGAAKLLKEHEEELQGTVVLVFQPAEEGGGGAKKIVEAGVLENVSAIFGLHVTNQLALGQVSSREGPMLAGSGFFKAKISGKGGHAALPQHTIDPILAASNVIVSLQHLVSREADPLDSQVVTVAKFEGGGAFNVIPDSVTIGGTFRAFSTKSFMQLKKRIEQVITRQASVNMCNATVDFIEEEKPFFPPTVNDKALHQFFKNVSGDMLGIENYVEMQPLMGSEDFSFYQQAIPGHFSFVGMQNKARSPMASPHSPYFEVNEELLPYGASLHASMATRYLLELKASTLNKSNKKDEL.

Positions 1–23 (MSFFKWVSFVLILHLLNPTLISC) are cleaved as a signal peptide. Mn(2+) contacts are provided by cysteine 134, histidine 136, glutamate 170, histidine 194, and histidine 397. The Prevents secretion from ER motif lies at 437–440 (KDEL).

The protein belongs to the peptidase M20 family. It depends on Mn(2+) as a cofactor. In terms of tissue distribution, expressed in leaves, stems, roots, siliques and flowers. Detected in the vascular tissue of cotyledons and roots, in adult leaves, stems, siliques, petals, hydathodes and in silique abscission zones and funicles.

The protein resides in the endoplasmic reticulum lumen. The catalysed reaction is a jasmonyl-L-amino acid + H2O = a jasmonate + an L-alpha-amino acid. Functionally, hydrolyzes certain amino acid conjugates of the plant growth regulator indole-3-acetic acid (IAA), including IAA-Ala, IAA-Asn, IAA-Cys, IAA-Glu, IAA-Met, IAA-Ser and IAA-Gly. Has a lower efficiency with IAA-Phe, IAA-Leu and IAA-Val and no activity with IAA-Ile. Important for IAA-Leu hydrolysis in roots. Also hydrolyzes amino acid conjugates of jasmonic acid and 12-hydroxy jasmonic acid. The protein is IAA-amino acid hydrolase ILR1-like 4 of Arabidopsis thaliana (Mouse-ear cress).